A 212-amino-acid chain; its full sequence is Nucleoside triphosphate pyrophosphatase (212 aa).

Catalysis depends on aspartate 79, which acts as the Proton acceptor.

This sequence belongs to the Maf family. A divalent metal cation serves as cofactor.

It localises to the cytoplasm. It catalyses the reaction a ribonucleoside 5'-triphosphate + H2O = a ribonucleoside 5'-phosphate + diphosphate + H(+). The catalysed reaction is a 2'-deoxyribonucleoside 5'-triphosphate + H2O = a 2'-deoxyribonucleoside 5'-phosphate + diphosphate + H(+). Its function is as follows. Nucleoside triphosphate pyrophosphatase. May have a dual role in cell division arrest and in preventing the incorporation of modified nucleotides into cellular nucleic acids. The chain is Nucleoside triphosphate pyrophosphatase from Nocardia farcinica (strain IFM 10152).